The following is a 454-amino-acid chain: Tyrosine aminotransferase (454 aa).

At methionine 1 the chain carries N-acetylmethionine. At lysine 280 the chain carries N6-(pyridoxal phosphate)lysine. Serine 448 carries the post-translational modification Phosphoserine.

The protein belongs to the class-I pyridoxal-phosphate-dependent aminotransferase family. In terms of assembly, homodimer. The cofactor is pyridoxal 5'-phosphate.

It catalyses the reaction L-tyrosine + 2-oxoglutarate = 3-(4-hydroxyphenyl)pyruvate + L-glutamate. Its pathway is amino-acid degradation; L-phenylalanine degradation; acetoacetate and fumarate from L-phenylalanine: step 2/6. Transaminase involved in tyrosine breakdown. Converts tyrosine to p-hydroxyphenylpyruvate. Can catalyze the reverse reaction, using glutamic acid, with 2-oxoglutarate as cosubstrate (in vitro). Has much lower affinity and transaminase activity for phenylalanine. The sequence is that of Tyrosine aminotransferase (Tat) from Mus musculus (Mouse).